The following is a 27-amino-acid chain: Equinin A (27 aa).

Positions 1–13 (AVDKGGGKAEKKD) are enriched in basic and acidic residues. The interval 1-27 (AVDKGGGKAEKKDGNRKKKLAGGEGGG) is disordered.

Its subcellular location is the secreted. Peptide with unknown function. Does not show antimicrobial and hemolytic activities. In Actinia equina (Beadlet anemone), this protein is Equinin A.